The following is a 373-amino-acid chain: Histidinol-phosphate aminotransferase (373 aa).

N6-(pyridoxal phosphate)lysine is present on Lys-230.

It belongs to the class-II pyridoxal-phosphate-dependent aminotransferase family. Histidinol-phosphate aminotransferase subfamily. As to quaternary structure, homodimer. Pyridoxal 5'-phosphate serves as cofactor.

The enzyme catalyses L-histidinol phosphate + 2-oxoglutarate = 3-(imidazol-4-yl)-2-oxopropyl phosphate + L-glutamate. Its pathway is amino-acid biosynthesis; L-histidine biosynthesis; L-histidine from 5-phospho-alpha-D-ribose 1-diphosphate: step 7/9. The sequence is that of Histidinol-phosphate aminotransferase from Synechococcus elongatus (strain ATCC 33912 / PCC 7942 / FACHB-805) (Anacystis nidulans R2).